Here is a 321-residue protein sequence, read N- to C-terminus: MSKPIQMEKGVKYRDADKMALIPVKNMPSEQKEVLRKPDWMKIKLPADSQRIQDIKSAMRKNNLHSVCEEASCPNLAECFNHGTATFMILGAICTRRCPFCDVAHGRPLPVEAEEPKKLAKTIADMKLKYVVITSVDRDDLRDGGAEHFANCNREIRELNPHIKIETLVPDFRGRMDVALDLMKDNPPDVFNHNLETAPRLYRKARPGANYKWSLQLLQKFKEQHPNVPTKSGLMMGLGETKEEIVEVLKDLRAHGVTMLTLGQYLAPSRHHLPVERYVPPSEFDELKEIALELGFTHAACGPFVRSSYHADMQAQGIEIK.

[4Fe-4S] cluster is bound by residues cysteine 68, cysteine 73, cysteine 79, cysteine 94, cysteine 98, cysteine 101, and serine 308. Residues phenylalanine 80–threonine 297 enclose the Radical SAM core domain.

It belongs to the radical SAM superfamily. Lipoyl synthase family. [4Fe-4S] cluster serves as cofactor.

Its subcellular location is the cytoplasm. It carries out the reaction [[Fe-S] cluster scaffold protein carrying a second [4Fe-4S](2+) cluster] + N(6)-octanoyl-L-lysyl-[protein] + 2 oxidized [2Fe-2S]-[ferredoxin] + 2 S-adenosyl-L-methionine + 4 H(+) = [[Fe-S] cluster scaffold protein] + N(6)-[(R)-dihydrolipoyl]-L-lysyl-[protein] + 4 Fe(3+) + 2 hydrogen sulfide + 2 5'-deoxyadenosine + 2 L-methionine + 2 reduced [2Fe-2S]-[ferredoxin]. It functions in the pathway protein modification; protein lipoylation via endogenous pathway; protein N(6)-(lipoyl)lysine from octanoyl-[acyl-carrier-protein]: step 2/2. In terms of biological role, catalyzes the radical-mediated insertion of two sulfur atoms into the C-6 and C-8 positions of the octanoyl moiety bound to the lipoyl domains of lipoate-dependent enzymes, thereby converting the octanoylated domains into lipoylated derivatives. In Vibrio campbellii (strain ATCC BAA-1116), this protein is Lipoyl synthase.